The sequence spans 190 residues: ADP-ribosylation factor-like protein 6 (190 aa).

A lipid anchor (N-myristoyl glycine) is attached at G2. GTP contacts are provided by residues 24–31 (GLDNSGKT), T50, 69–73 (DMAGQ), G72, 130–133 (NKMD), and A164. Mg(2+) is bound by residues T31 and T50.

The protein belongs to the small GTPase superfamily. Arf family.

The protein localises to the cytoplasm. This is ADP-ribosylation factor-like protein 6 from Caenorhabditis briggsae.